Consider the following 135-residue polypeptide: Small ribosomal subunit protein uS9 (135 aa).

Residues 108–118 show a composition bias toward basic and acidic residues; that stretch reads VGDPRRTEPHK. The segment at 108-135 is disordered; sequence VGDPRRTEPHKPNRSTKGPRAKRQKSYR. Basic residues predominate over residues 119 to 135; that stretch reads PNRSTKGPRAKRQKSYR.

It belongs to the universal ribosomal protein uS9 family.

The sequence is that of Small ribosomal subunit protein uS9 (rps9) from Pyrococcus horikoshii (strain ATCC 700860 / DSM 12428 / JCM 9974 / NBRC 100139 / OT-3).